The chain runs to 317 residues: Acetyl-coenzyme A carboxylase carboxyl transferase subunit alpha (317 aa).

The 255-residue stretch at 40 to 294 (RLQHKSQELT…KQQILADLAE (255 aa)) folds into the CoA carboxyltransferase C-terminal domain.

Belongs to the AccA family. As to quaternary structure, acetyl-CoA carboxylase is a heterohexamer composed of biotin carboxyl carrier protein (AccB), biotin carboxylase (AccC) and two subunits each of ACCase subunit alpha (AccA) and ACCase subunit beta (AccD).

Its subcellular location is the cytoplasm. It catalyses the reaction N(6)-carboxybiotinyl-L-lysyl-[protein] + acetyl-CoA = N(6)-biotinyl-L-lysyl-[protein] + malonyl-CoA. Its pathway is lipid metabolism; malonyl-CoA biosynthesis; malonyl-CoA from acetyl-CoA: step 1/1. In terms of biological role, component of the acetyl coenzyme A carboxylase (ACC) complex. First, biotin carboxylase catalyzes the carboxylation of biotin on its carrier protein (BCCP) and then the CO(2) group is transferred by the carboxyltransferase to acetyl-CoA to form malonyl-CoA. This chain is Acetyl-coenzyme A carboxylase carboxyl transferase subunit alpha, found in Haemophilus ducreyi (strain 35000HP / ATCC 700724).